The following is a 265-amino-acid chain: WUSCHEL-related homeobox 3B (265 aa).

A DNA-binding region (homeobox; WUS-type) is located at residues 4–68 (TPSTRWCPTP…NHKARERQRL (65 aa)). Disordered stretches follow at residues 77–107 (QQQY…APPA) and 242–265 (PTKS…TSTN). The span at 254–265 (SSKSSSCSTSTN) shows a compositional bias: low complexity.

It belongs to the WUS homeobox family. In terms of tissue distribution, predominantly expressed in tissues enriched for shoot meristems and young lateral organ primordia. First expressed in lateral domains of shoot meristems. It is then expressed in the margins of young lateral organ primordia. Not expressed in roots, seedling leaves or fully expanded coleoptiles. Also expressed in vegetative shoot apices (five leaf primordia and the SAM) and in the male inflorescence. Expressed at high level in the female inflorescence.

The protein localises to the nucleus. Its function is as follows. Probable transcription factor required to initiate organ founder cells in a lateral domain of shoot meristems. Involved in leaf formation. The protein is WUSCHEL-related homeobox 3B (WOX3B) of Zea mays (Maize).